The primary structure comprises 180 residues: Protein GrpE (180 aa).

The disordered stretch occupies residues 1–25 (MSKKKAEDKQPIIKDEAVEEPKSDS).

This sequence belongs to the GrpE family. In terms of assembly, homodimer.

Its subcellular location is the cytoplasm. Participates actively in the response to hyperosmotic and heat shock by preventing the aggregation of stress-denatured proteins, in association with DnaK and GrpE. It is the nucleotide exchange factor for DnaK and may function as a thermosensor. Unfolded proteins bind initially to DnaJ; upon interaction with the DnaJ-bound protein, DnaK hydrolyzes its bound ATP, resulting in the formation of a stable complex. GrpE releases ADP from DnaK; ATP binding to DnaK triggers the release of the substrate protein, thus completing the reaction cycle. Several rounds of ATP-dependent interactions between DnaJ, DnaK and GrpE are required for fully efficient folding. This chain is Protein GrpE, found in Fructilactobacillus sanfranciscensis (Lactobacillus sanfranciscensis).